The primary structure comprises 845 residues: Protein translocase subunit SecA (845 aa).

Residues Q85, 103 to 107 (GEGKT), and D492 contribute to the ATP site. Residues 787–845 (REQVAQGQAEHPETEQDAAAQSNTSAKRQPVRVDKKVGRNDLCPCGSGKKFKNCHGRNA) are disordered. C829, C831, C840, and H841 together coordinate Zn(2+). Residues 835 to 845 (KKFKNCHGRNA) show a composition bias toward basic residues.

The protein belongs to the SecA family. Monomer and homodimer. Part of the essential Sec protein translocation apparatus which comprises SecA, SecYEG and auxiliary proteins SecDF. Other proteins may also be involved. It depends on Zn(2+) as a cofactor.

It localises to the cell membrane. The protein localises to the cytoplasm. It catalyses the reaction ATP + H2O + cellular proteinSide 1 = ADP + phosphate + cellular proteinSide 2.. Functionally, part of the Sec protein translocase complex. Interacts with the SecYEG preprotein conducting channel. Has a central role in coupling the hydrolysis of ATP to the transfer of proteins into and across the cell membrane, serving as an ATP-driven molecular motor driving the stepwise translocation of polypeptide chains across the membrane. The protein is Protein translocase subunit SecA of Enterococcus faecalis (strain ATCC 700802 / V583).